We begin with the raw amino-acid sequence, 114 residues long: uncharacterized protein (114 aa).

This is an uncharacterized protein from Saccharomyces cerevisiae (strain ATCC 204508 / S288c) (Baker's yeast).